Here is a 300-residue protein sequence, read N- to C-terminus: Energy-coupling factor transporter ATP-binding protein EcfA2 (300 aa).

Residues 3–258 (IKAKNIVKIY…NKFLIENKML (256 aa)) form the ABC transporter domain. Position 40–47 (40–47 (GQTGSGKT)) interacts with ATP.

Belongs to the ABC transporter superfamily. Energy-coupling factor EcfA family. In terms of assembly, forms a stable energy-coupling factor (ECF) transporter complex composed of 2 membrane-embedded substrate-binding proteins (S component), 2 ATP-binding proteins (A component) and 2 transmembrane proteins (T component).

The protein localises to the cell membrane. In terms of biological role, ATP-binding (A) component of a common energy-coupling factor (ECF) ABC-transporter complex. Unlike classic ABC transporters this ECF transporter provides the energy necessary to transport a number of different substrates. In Mesomycoplasma hyopneumoniae (strain 232) (Mycoplasma hyopneumoniae), this protein is Energy-coupling factor transporter ATP-binding protein EcfA2.